A 2639-amino-acid polypeptide reads, in one-letter code: BAH and coiled-coil domain-containing protein 1 (2639 aa).

Disordered regions lie at residues serine 23–phenylalanine 49, serine 84–proline 107, alanine 188–arginine 249, phenylalanine 669–proline 702, valine 716–threonine 746, glutamine 939–alanine 1047, serine 1104–glycine 1331, glutamine 1457–lysine 1513, lysine 1582–glutamate 1666, glutamate 1722–leucine 1776, phenylalanine 1868–alanine 1893, and lysine 2057–leucine 2119. Composition is skewed to low complexity over residues alanine 24–alanine 41 and serine 84–proline 98. 2 stretches are compositionally biased toward basic and acidic residues: residues glycine 211 to lysine 247 and glutamate 679 to valine 698. Position 222 is an N6-acetyllysine (lysine 222). The segment covering arginine 946–proline 964 has biased composition (basic and acidic residues). Low complexity predominate over residues alanine 972–threonine 988. Residues lysine 989 to serine 1013 are compositionally biased toward pro residues. Positions valine 1106 to proline 1122 are enriched in polar residues. Low complexity predominate over residues leucine 1182–glycine 1198. Positions alanine 1212–glycine 1221 are enriched in basic and acidic residues. Residues leucine 1244–cysteine 1275 are compositionally biased toward acidic residues. Residues aspartate 1307–valine 1324 show a composition bias toward pro residues. Positions glutamate 1439–glutamate 1473 form a coiled coil. Positions glutamine 1457 to serine 1475 are enriched in basic and acidic residues. Over residues proline 1478 to serine 1492 the composition is skewed to basic residues. Positions glycine 1751–glycine 1761 are enriched in basic residues. Residues phenylalanine 1868–serine 1888 show a composition bias toward acidic residues. Serine 2274 carries the phosphoserine modification. 3 disordered regions span residues serine 2317–glycine 2336, serine 2348–glutamate 2383, and glycine 2432–proline 2472. Positions serine 2348–serine 2371 are enriched in low complexity. Residues aspartate 2372–glutamate 2383 show a composition bias toward acidic residues. A compositionally biased stretch (low complexity) spans glycine 2432–lysine 2442. A BAH domain is found at glutamate 2513–aspartate 2633.

This Homo sapiens (Human) protein is BAH and coiled-coil domain-containing protein 1.